We begin with the raw amino-acid sequence, 251 residues long: 1-(5-phosphoribosyl)-5-[(5-phosphoribosylamino)methylideneamino] imidazole-4-carboxamide isomerase (251 aa).

The active-site Proton acceptor is Asp-7. Asp-131 (proton donor) is an active-site residue.

This sequence belongs to the HisA/HisF family.

The protein localises to the cytoplasm. It carries out the reaction 1-(5-phospho-beta-D-ribosyl)-5-[(5-phospho-beta-D-ribosylamino)methylideneamino]imidazole-4-carboxamide = 5-[(5-phospho-1-deoxy-D-ribulos-1-ylimino)methylamino]-1-(5-phospho-beta-D-ribosyl)imidazole-4-carboxamide. It functions in the pathway amino-acid biosynthesis; L-histidine biosynthesis; L-histidine from 5-phospho-alpha-D-ribose 1-diphosphate: step 4/9. In Blochmanniella floridana, this protein is 1-(5-phosphoribosyl)-5-[(5-phosphoribosylamino)methylideneamino] imidazole-4-carboxamide isomerase.